We begin with the raw amino-acid sequence, 212 residues long: GrpE protein homolog, mitochondrial (212 aa).

This sequence belongs to the GrpE family. Component of the PAM complex, at least composed of mtHsp70, MGE1, TIM44, PAM16, PAM17 and PAM18.

It localises to the mitochondrion matrix. Essential component of the PAM complex, a complex required for the translocation of transit peptide-containing proteins from the inner membrane into the mitochondrial matrix in an ATP-dependent manner. Seems to control the nucleotide-dependent binding of SSC1 to substrate proteins. The chain is GrpE protein homolog, mitochondrial (mge1) from Eremothecium gossypii (strain ATCC 10895 / CBS 109.51 / FGSC 9923 / NRRL Y-1056) (Yeast).